A 388-amino-acid polypeptide reads, in one-letter code: Phosphopentomutase (388 aa).

Mn(2+) contacts are provided by aspartate 10, aspartate 282, histidine 287, aspartate 323, histidine 324, and histidine 335.

Belongs to the phosphopentomutase family. Requires Mn(2+) as cofactor.

It is found in the cytoplasm. The enzyme catalyses 2-deoxy-alpha-D-ribose 1-phosphate = 2-deoxy-D-ribose 5-phosphate. The catalysed reaction is alpha-D-ribose 1-phosphate = D-ribose 5-phosphate. It functions in the pathway carbohydrate degradation; 2-deoxy-D-ribose 1-phosphate degradation; D-glyceraldehyde 3-phosphate and acetaldehyde from 2-deoxy-alpha-D-ribose 1-phosphate: step 1/2. Functionally, isomerase that catalyzes the conversion of deoxy-ribose 1-phosphate (dRib-1-P) and ribose 1-phosphate (Rib-1-P) to deoxy-ribose 5-phosphate (dRib-5-P) and ribose 5-phosphate (Rib-5-P), respectively. The sequence is that of Phosphopentomutase from Acetivibrio thermocellus (strain ATCC 27405 / DSM 1237 / JCM 9322 / NBRC 103400 / NCIMB 10682 / NRRL B-4536 / VPI 7372) (Clostridium thermocellum).